The following is a 440-amino-acid chain: Tyrosine--tRNA ligase (440 aa).

Tyrosine 46 contributes to the L-tyrosine binding site. A 'HIGH' region motif is present at residues 51 to 60 (PTAASLHIGN). Positions 181 and 185 each coordinate L-tyrosine. The 'KMSKS' region motif lies at 241 to 245 (KFGKS). Lysine 244 serves as a coordination point for ATP. One can recognise an S4 RNA-binding domain in the interval 373–439 (DRVIDAAQAA…GKKALGAVEN (67 aa)).

The protein belongs to the class-I aminoacyl-tRNA synthetase family. TyrS type 1 subfamily. Homodimer.

Its subcellular location is the cytoplasm. It catalyses the reaction tRNA(Tyr) + L-tyrosine + ATP = L-tyrosyl-tRNA(Tyr) + AMP + diphosphate + H(+). In terms of biological role, catalyzes the attachment of tyrosine to tRNA(Tyr) in a two-step reaction: tyrosine is first activated by ATP to form Tyr-AMP and then transferred to the acceptor end of tRNA(Tyr). This is Tyrosine--tRNA ligase from Bifidobacterium longum subsp. infantis (strain ATCC 15697 / DSM 20088 / JCM 1222 / NCTC 11817 / S12).